A 269-amino-acid chain; its full sequence is Octanoyltransferase LipM (269 aa).

Residues 31 to 239 enclose the BPL/LPL catalytic domain; it reads NHGAPVLRFY…GFSEGFEVNF (209 aa). Cys141 acts as the Acyl-thioester intermediate in catalysis.

Belongs to the octanoyltransferase LipM family. Monomer.

It catalyses the reaction octanoyl-[ACP] + L-lysyl-[protein] = N(6)-octanoyl-L-lysyl-[protein] + holo-[ACP] + H(+). It functions in the pathway protein modification; protein lipoylation via endogenous pathway; protein N(6)-(lipoyl)lysine from octanoyl-[acyl-carrier-protein]. Catalyzes the transfer of endogenously produced octanoic acid from octanoyl-acyl-carrier-protein onto the lipoyl domain of GcvH, an intermediate carrier during protein lipoylation. This chain is Octanoyltransferase LipM, found in Carboxydothermus hydrogenoformans (strain ATCC BAA-161 / DSM 6008 / Z-2901).